Here is a 220-residue protein sequence, read N- to C-terminus: Fructose-6-phosphate aldolase 1 (220 aa).

The Schiff-base intermediate with substrate role is filled by Lys-85.

The protein belongs to the transaldolase family. Type 3A subfamily. As to quaternary structure, homodecamer.

It localises to the cytoplasm. The enzyme catalyses beta-D-fructose 6-phosphate = dihydroxyacetone + D-glyceraldehyde 3-phosphate. Catalyzes the reversible formation of fructose 6-phosphate from dihydroxyacetone and D-glyceraldehyde 3-phosphate via an aldolization reaction. The polypeptide is Fructose-6-phosphate aldolase 1 (fsaA) (Escherichia coli O157:H7).